A 258-amino-acid chain; its full sequence is 1-(5-phosphoribosyl)-5-[(5-phosphoribosylamino)methylideneamino] imidazole-4-carboxamide isomerase (258 aa).

Aspartate 17 functions as the Proton acceptor in the catalytic mechanism. Residue aspartate 136 is the Proton donor of the active site.

This sequence belongs to the HisA/HisF family.

The protein resides in the cytoplasm. The catalysed reaction is 1-(5-phospho-beta-D-ribosyl)-5-[(5-phospho-beta-D-ribosylamino)methylideneamino]imidazole-4-carboxamide = 5-[(5-phospho-1-deoxy-D-ribulos-1-ylimino)methylamino]-1-(5-phospho-beta-D-ribosyl)imidazole-4-carboxamide. The protein operates within amino-acid biosynthesis; L-histidine biosynthesis; L-histidine from 5-phospho-alpha-D-ribose 1-diphosphate: step 4/9. The chain is 1-(5-phosphoribosyl)-5-[(5-phosphoribosylamino)methylideneamino] imidazole-4-carboxamide isomerase from Corynebacterium jeikeium (strain K411).